A 299-amino-acid chain; its full sequence is Serine/threonine-protein kinase 1 (299 aa).

The Protein kinase domain occupies 39 to 277 (IATKPMFEGG…FKGLVSHPWF (239 aa)). ATP contacts are provided by residues 45 to 53 (FEGGRRNNV) and Lys66. The Proton acceptor role is filled by Asp153.

It belongs to the protein kinase superfamily. Ser/Thr protein kinase family.

Its subcellular location is the virion. It localises to the host cytoplasm. It carries out the reaction L-seryl-[protein] + ATP = O-phospho-L-seryl-[protein] + ADP + H(+). It catalyses the reaction L-threonyl-[protein] + ATP = O-phospho-L-threonyl-[protein] + ADP + H(+). In terms of biological role, essential for viral replication. It may mediate the virus progression through DNA replication. This African swine fever virus (isolate Pig/Kenya/KEN-50/1950) (ASFV) protein is Serine/threonine-protein kinase 1.